The following is a 1023-amino-acid chain: Protein FAM13A (1023 aa).

Residues 43 to 231 form the Rho-GAP domain; it reads VSLQELERQG…KILENYNTLF (189 aa). The segment at 269 to 290 is disordered; the sequence is LERDMPKPPPKTKIPKSRSEGS. A Phosphoserine modification is found at serine 345. Disordered stretches follow at residues 381-437 and 459-562; these read VNNS…SGFN and CAGE…EVPQ. Residues 384-405 show a composition bias toward low complexity; it reads SGGQSSEDSESGTLSASSATSA. Basic and acidic residues-rich tracts occupy residues 412–427 and 509–524; these read SKEQ…KGLI and SDER…HTQH. Residues 536-549 are compositionally biased toward polar residues; that stretch reads PSLSDTKQQRNQDA. A phosphoserine mark is found at serine 597 and serine 617. Disordered stretches follow at residues 628-663 and 726-759; these read QYLD…QEDL and ISEE…KKQE. A coiled-coil region spans residues 666-730; sequence AQLTRRIQSL…ESKLKISEED (65 aa). Serine 727 carries the phosphoserine modification. The residue at position 732 (threonine 732) is a Phosphothreonine. The span at 738–748 shows a compositional bias: polar residues; the sequence is RSNTLPKSFGS. The span at 750–759 shows a compositional bias: basic and acidic residues; the sequence is LEKEDEKKQE. Residues 946-978 are a coiled coil; it reads ASIPELLEHLQEMREEKKRIRKKLRDFEDNFFR.

The protein belongs to the FAM13 family. As to expression, isoform 1 is widely expressed, with highest expression in skeletal muscle, thymus, brain and lung. Isoform 3 is less abundant than isoform 1 and predominantly expressed in kidney, pancreas, liver, lung and thymus.

The sequence is that of Protein FAM13A (FAM13A) from Homo sapiens (Human).